Reading from the N-terminus, the 968-residue chain is Alanine--tRNA ligase, cytoplasmic (968 aa).

Met-1 is modified (N-acetylmethionine). ATP contacts are provided by residues Arg-77, His-95, Trp-176, and 214–216; that span reads IWN. L-alanine contacts are provided by Asn-216 and Asp-239. Gly-243 lines the ATP pocket. 2 positions are modified to phosphoserine: Ser-399 and Ser-555. The Zn(2+) site is built by His-605, His-609, Cys-723, and His-727. Positions 750-763 match the Nuclear localization signal motif; the sequence is RRIVAVTGAEAQKA. The residue at position 876 (Lys-876) is an N6-acetyllysine. Lys-943 carries the N6,N6,N6-trimethyllysine; alternate modification. Lys-943 bears the N6,N6-dimethyllysine; alternate mark. At Lys-943 the chain carries N6-methyllysine; alternate.

The protein belongs to the class-II aminoacyl-tRNA synthetase family. Monomer. Interacts with ANKRD16; the interaction is direct. Zn(2+) is required as a cofactor. Post-translationally, ISGylated. In terms of processing, methylation at 'Lys-943' by METTL21C.

The protein resides in the cytoplasm. It is found in the nucleus. It carries out the reaction tRNA(Ala) + L-alanine + ATP = L-alanyl-tRNA(Ala) + AMP + diphosphate. It catalyses the reaction (S)-lactate + ATP + H(+) = (S)-lactoyl-AMP + diphosphate. The catalysed reaction is (S)-lactoyl-AMP + L-lysyl-[protein] = N(6)-[(S)-lactoyl]-L-lysyl-[protein] + AMP + 2 H(+). The protein lactyltransferase activity is inhibited by beta-alanine. In terms of biological role, catalyzes the attachment of alanine to tRNA(Ala) in a two-step reaction: alanine is first activated by ATP to form Ala-AMP and then transferred to the acceptor end of tRNA(Ala). Also edits incorrectly charged tRNA(Ala) via its editing domain. In presence of high levels of lactate, also acts as a protein lactyltransferase that mediates lactylation of lysine residues in target proteins, such as TEAD1, TP53/p53 and YAP1. Protein lactylation takes place in a two-step reaction: lactate is first activated by ATP to form lactate-AMP and then transferred to lysine residues of target proteins. Acts as an inhibitor of TP53/p53 activity by catalyzing lactylation of TP53/p53. Acts as a positive regulator of the Hippo pathway by mediating lactylation of TEAD1 and YAP1. In Mus musculus (Mouse), this protein is Alanine--tRNA ligase, cytoplasmic.